Consider the following 329-residue polypeptide: tRNA dimethylallyltransferase (329 aa).

24-31 (GSTGIGKT) is an ATP binding site. Position 26–31 (26–31 (TGIGKT)) interacts with substrate. The tract at residues 49–52 (DSMQ) is interaction with substrate tRNA.

It belongs to the IPP transferase family. As to quaternary structure, monomer. The cofactor is Mg(2+).

It catalyses the reaction adenosine(37) in tRNA + dimethylallyl diphosphate = N(6)-dimethylallyladenosine(37) in tRNA + diphosphate. In terms of biological role, catalyzes the transfer of a dimethylallyl group onto the adenine at position 37 in tRNAs that read codons beginning with uridine, leading to the formation of N6-(dimethylallyl)adenosine (i(6)A). This chain is tRNA dimethylallyltransferase, found in Methylacidiphilum infernorum (isolate V4) (Methylokorus infernorum (strain V4)).